The chain runs to 201 residues: Small ribosomal subunit protein uS4c (201 aa).

Residues 89–150 (MRLDNIVFRL…RQKSQAIITK (62 aa)) form the S4 RNA-binding domain.

The protein belongs to the universal ribosomal protein uS4 family. In terms of assembly, part of the 30S ribosomal subunit. Contacts protein S5. The interaction surface between S4 and S5 is involved in control of translational fidelity.

It localises to the plastid. The protein localises to the chloroplast. One of the primary rRNA binding proteins, it binds directly to 16S rRNA where it nucleates assembly of the body of the 30S subunit. Its function is as follows. With S5 and S12 plays an important role in translational accuracy. The protein is Small ribosomal subunit protein uS4c (rps4) of Funaria hygrometrica (Moss).